A 362-amino-acid polypeptide reads, in one-letter code: Protein-glutamate methylesterase/protein-glutamine glutaminase 5 (362 aa).

Residues 13–130 (RVLVVDDSAL…RRFLEESRVR (118 aa)) enclose the Response regulatory domain. The residue at position 64 (Asp64) is a 4-aspartylphosphate. The 191-residue stretch at 172-362 (LQTTERVVVV…IPPELLRLCR (191 aa)) folds into the CheB-type methylesterase domain. Catalysis depends on residues Ser184, His210, and Asp306.

Belongs to the CheB family. In terms of processing, phosphorylated by CheA. Phosphorylation of the N-terminal regulatory domain activates the methylesterase activity.

It localises to the cytoplasm. It catalyses the reaction [protein]-L-glutamate 5-O-methyl ester + H2O = L-glutamyl-[protein] + methanol + H(+). The enzyme catalyses L-glutaminyl-[protein] + H2O = L-glutamyl-[protein] + NH4(+). Its function is as follows. Involved in chemotaxis. Part of a chemotaxis signal transduction system that modulates chemotaxis in response to various stimuli. Catalyzes the demethylation of specific methylglutamate residues introduced into the chemoreceptors (methyl-accepting chemotaxis proteins or MCP) by CheR. Also mediates the irreversible deamidation of specific glutamine residues to glutamic acid. In Anaeromyxobacter dehalogenans (strain 2CP-C), this protein is Protein-glutamate methylesterase/protein-glutamine glutaminase 5.